The primary structure comprises 137 residues: Fluoride-specific ion channel FluC 1 (137 aa).

4 helical membrane passes run 4 to 24 (LIYI…YYLG), 37 to 57 (LATL…TTYI), 62 to 82 (ILPA…FTTF), and 100 to 120 (IAFL…GLGY). Residues glycine 77 and threonine 80 each contribute to the Na(+) site.

Belongs to the fluoride channel Fluc/FEX (TC 1.A.43) family.

The protein resides in the cell membrane. The catalysed reaction is fluoride(in) = fluoride(out). Its activity is regulated as follows. Na(+) is not transported, but it plays an essential structural role and its presence is essential for fluoride channel function. Functionally, fluoride-specific ion channel. Important for reducing fluoride concentration in the cell, thus reducing its toxicity. In Bacillus cereus (strain ATCC 10987 / NRS 248), this protein is Fluoride-specific ion channel FluC 1.